The sequence spans 274 residues: PTS system sorbose-specific EIID component (274 aa).

Residues 4–273 (KKITQGDLVS…GIIGNALGFL (270 aa)) form the PTS EIID domain. 6 consecutive transmembrane segments (helical) span residues 61 to 81 (LVFF…TAAM), 99 to 119 (IKVG…WGTL), 126 to 146 (LGAS…FFIF), 186 to 206 (ILGL…NVPL), 226 to 246 (ILDQ…MVRL), and 253 to 273 (PVWL…LGFL).

It is found in the cell inner membrane. Functionally, the phosphoenolpyruvate-dependent sugar phosphotransferase system (PTS), a major carbohydrate active transport system, catalyzes the phosphorylation of incoming sugar substrates concomitant with their translocation across the cell membrane. The enzyme II SorABFM PTS system is involved in sorbose transport. The chain is PTS system sorbose-specific EIID component from Klebsiella pneumoniae.